Reading from the N-terminus, the 690-residue chain is Translation factor GUF1, mitochondrial (690 aa).

The segment at 40–68 (SVTVPAARRHNSTKSTNSTTSTNSTTATS) is disordered. Positions 52 to 68 (TKSTNSTTSTNSTTATS) are enriched in low complexity. In terms of domain architecture, tr-type G spans 89 to 272 (ERYRNFCIVA…AVIKKMPAPV (184 aa)). GTP-binding positions include 98–105 (AHIDHGKS), 165–169 (DTPGH), and 219–222 (NKID).

This sequence belongs to the TRAFAC class translation factor GTPase superfamily. Classic translation factor GTPase family. LepA subfamily.

The protein localises to the mitochondrion inner membrane. The enzyme catalyses GTP + H2O = GDP + phosphate + H(+). Functionally, promotes mitochondrial protein synthesis. May act as a fidelity factor of the translation reaction, by catalyzing a one-codon backward translocation of tRNAs on improperly translocated ribosomes. Binds to mitochondrial ribosomes in a GTP-dependent manner. The chain is Translation factor GUF1, mitochondrial from Sordaria macrospora (strain ATCC MYA-333 / DSM 997 / K(L3346) / K-hell).